The chain runs to 196 residues: ATP-dependent Clp protease proteolytic subunit (196 aa).

The Nucleophile role is filled by Ser-98. The active site involves His-123.

Belongs to the peptidase S14 family. In terms of assembly, fourteen ClpP subunits assemble into 2 heptameric rings which stack back to back to give a disk-like structure with a central cavity, resembling the structure of eukaryotic proteasomes.

Its subcellular location is the cytoplasm. It catalyses the reaction Hydrolysis of proteins to small peptides in the presence of ATP and magnesium. alpha-casein is the usual test substrate. In the absence of ATP, only oligopeptides shorter than five residues are hydrolyzed (such as succinyl-Leu-Tyr-|-NHMec, and Leu-Tyr-Leu-|-Tyr-Trp, in which cleavage of the -Tyr-|-Leu- and -Tyr-|-Trp bonds also occurs).. Cleaves peptides in various proteins in a process that requires ATP hydrolysis. Has a chymotrypsin-like activity. Plays a major role in the degradation of misfolded proteins. ClpXP is involved in the complete degradation of the Site-2 clipped anti-sigma-W factor RsiW. This results in the release of SigW and the transcription activation of the genes under the control of the sigma-W factor. This Geobacillus kaustophilus (strain HTA426) protein is ATP-dependent Clp protease proteolytic subunit.